The chain runs to 365 residues: Donuts protein 1 (365 aa).

The segment at 28–49 is disordered; it reads NSGLELPSQDYTNVEEKESSPK. Positions 82-125 constitute a CUE domain; it reads EKLCVLKELKIAFPEVDDTLIKAILIASQGVLEPAFNSLLYYSS. Disordered regions lie at residues 215–246 and 286–335; these read HNTI…KGVN and ESEE…YKSA. Residues 224–244 are compositionally biased toward basic and acidic residues; that stretch reads SILKGKEKGKEEEKEKGEEKG. Residues 286–295 show a composition bias toward acidic residues; it reads ESEEEEEQDV. Residues 315–331 show a composition bias toward basic and acidic residues; it reads EAQRDSADRLPAKDDGG.

In terms of assembly, may interact directly with ADY3. Probable component of a spindle pole body (SPB) complex composed of ADY3, SSP1, DON1, MPC54, SPO21/MPC70, NUD1 and CNM67.

The protein resides in the prospore membrane. Involved in the pathway that organizes the prospore membrane (PSM) during sporulation. This Saccharomyces cerevisiae (strain ATCC 204508 / S288c) (Baker's yeast) protein is Donuts protein 1 (DON1).